The following is a 285-amino-acid chain: Dermonecrotic toxin LlSicTox-alphaIII2 (285 aa).

Residue His12 is part of the active site. Glu32 and Asp34 together coordinate Mg(2+). His47 acts as the Nucleophile in catalysis. A disulfide bond links Cys51 and Cys57. Mg(2+) is bound at residue Asp91.

The protein belongs to the arthropod phospholipase D family. Class I subfamily. Requires Mg(2+) as cofactor. Expressed by the venom gland.

The protein resides in the secreted. The catalysed reaction is an N-(acyl)-sphingosylphosphocholine = an N-(acyl)-sphingosyl-1,3-cyclic phosphate + choline. It carries out the reaction an N-(acyl)-sphingosylphosphoethanolamine = an N-(acyl)-sphingosyl-1,3-cyclic phosphate + ethanolamine. It catalyses the reaction a 1-acyl-sn-glycero-3-phosphocholine = a 1-acyl-sn-glycero-2,3-cyclic phosphate + choline. The enzyme catalyses a 1-acyl-sn-glycero-3-phosphoethanolamine = a 1-acyl-sn-glycero-2,3-cyclic phosphate + ethanolamine. Its function is as follows. Dermonecrotic toxins cleave the phosphodiester linkage between the phosphate and headgroup of certain phospholipids (sphingolipid and lysolipid substrates), forming an alcohol (often choline) and a cyclic phosphate. This toxin acts on sphingomyelin (SM) (228.2 U/mg). It may also act on ceramide phosphoethanolamine (CPE), lysophosphatidylcholine (LPC) and lysophosphatidylethanolamine (LPE), but not on lysophosphatidylserine (LPS), and lysophosphatidylglycerol (LPG). It acts by transphosphatidylation, releasing exclusively cyclic phosphate products as second products. Induces dermonecrosis, hemolysis, increased vascular permeability, edema, inflammatory response, and platelet aggregation. Is lethal to mice. In Loxosceles laeta (South American recluse spider), this protein is Dermonecrotic toxin LlSicTox-alphaIII2.